A 241-amino-acid polypeptide reads, in one-letter code: tRNA (guanine-N(7)-)-methyltransferase B (241 aa).

Residues glycine 61, glutamate 84, arginine 86, asparagine 117, alanine 118, and leucine 137 each coordinate S-adenosyl-L-methionine. Residue aspartate 140 is part of the active site. The alphaC helix stretch occupies residues 141–149 (PHFKKTKHK). The S-adenosyl-L-methionine site is built by threonine 215 and glutamate 217. The tract at residues 215-223 (TEEGKKVQR) is alpha6 helix.

It belongs to the class I-like SAM-binding methyltransferase superfamily. TrmB family. Catalytic component of the METTL1-WDR4 complex, composed of mettl1 and wdr4.

The protein localises to the nucleus. The catalysed reaction is guanosine(46) in tRNA + S-adenosyl-L-methionine = N(7)-methylguanosine(46) in tRNA + S-adenosyl-L-homocysteine. The enzyme catalyses a guanosine in mRNA + S-adenosyl-L-methionine = an N(7)-methylguanosine in mRNA + S-adenosyl-L-homocysteine. It catalyses the reaction a guanosine in miRNA + S-adenosyl-L-methionine = an N(7)-methylguanosine in miRNA + S-adenosyl-L-homocysteine. The protein operates within tRNA modification; N(7)-methylguanine-tRNA biosynthesis. In terms of biological role, catalytic component of METTL1-WDR4 methyltransferase complex that mediates the formation of N(7)-methylguanine in a subset of RNA species, such as tRNAs, mRNAs and microRNAs (miRNAs). Catalyzes the formation of N(7)-methylguanine at position 46 (m7G46) in a large subset of tRNAs that contain the 5'-RAGGU-3' motif within the variable loop. M7G46 interacts with C13-G22 in the D-loop to stabilize tRNA tertiary structure and protect tRNAs from decay. Also acts as a methyltransferase for a subset of internal N(7)-methylguanine in mRNAs. Internal N(7)-methylguanine methylation of mRNAs in response to stress promotes their relocalization to stress granules, thereby suppressing their translation. Also methylates a specific subset of miRNAs. This is tRNA (guanine-N(7)-)-methyltransferase B (mettl1-B) from Xenopus tropicalis (Western clawed frog).